The following is a 418-amino-acid chain: Probable serine/threonine-protein kinase nek2 (418 aa).

The Protein kinase domain maps to 4–264 (YEILGALGKG…VNELLGYSFI (261 aa)). Residues 10–18 (LGKGSFGVV) and Lys-33 each bind ATP. The active-site Proton acceptor is Asp-135. Residues 278 to 363 (QGLKQMDEDL…SNLSLNCNNS (86 aa)) are a coiled coil.

It belongs to the protein kinase superfamily. NEK Ser/Thr protein kinase family. NIMA subfamily.

The catalysed reaction is L-seryl-[protein] + ATP = O-phospho-L-seryl-[protein] + ADP + H(+). It catalyses the reaction L-threonyl-[protein] + ATP = O-phospho-L-threonyl-[protein] + ADP + H(+). Functionally, involved in centrosome biogenesis. Seems to be required for recruitment of centrosomal material and might be involved in de novo centrosome formation. This is Probable serine/threonine-protein kinase nek2 (nek2) from Dictyostelium discoideum (Social amoeba).